The primary structure comprises 509 residues: Glutamyl-tRNA(Gln) amidotransferase subunit A (509 aa).

Catalysis depends on charge relay system residues K75 and S150. S174 functions as the Acyl-ester intermediate in the catalytic mechanism. The segment at D471–S509 is disordered. The span at A496 to S509 shows a compositional bias: basic residues.

This sequence belongs to the amidase family. GatA subfamily. In terms of assembly, heterotrimer of A, B and C subunits.

The enzyme catalyses L-glutamyl-tRNA(Gln) + L-glutamine + ATP + H2O = L-glutaminyl-tRNA(Gln) + L-glutamate + ADP + phosphate + H(+). Allows the formation of correctly charged Gln-tRNA(Gln) through the transamidation of misacylated Glu-tRNA(Gln) in organisms which lack glutaminyl-tRNA synthetase. The reaction takes place in the presence of glutamine and ATP through an activated gamma-phospho-Glu-tRNA(Gln). The protein is Glutamyl-tRNA(Gln) amidotransferase subunit A of Synechococcus sp. (strain JA-3-3Ab) (Cyanobacteria bacterium Yellowstone A-Prime).